The chain runs to 132 residues: Small ribosomal subunit protein uS8 (132 aa).

It belongs to the universal ribosomal protein uS8 family. In terms of assembly, part of the 30S ribosomal subunit. Contacts proteins S5 and S12.

Its function is as follows. One of the primary rRNA binding proteins, it binds directly to 16S rRNA central domain where it helps coordinate assembly of the platform of the 30S subunit. The sequence is that of Small ribosomal subunit protein uS8 from Xanthomonas axonopodis pv. citri (strain 306).